Consider the following 364-residue polypeptide: GDP-fucose transporter 1 (364 aa).

Transmembrane regions (helical) follow at residues 34 to 56 (FLLRALQIALVVSLYWVTSISMV), 76 to 98 (VTFYQCLVTTLLCKGLSALAACC), 111 to 130 (LRVARSVLPLSVVFIGMITF), 140 to 162 (VAFYNVGRSLTTVFNVLLSYLLL), 167 to 185 (SFYALLTCGIIIGGFWLGV), 195 to 214 (SWLGTVFGVLASLCVSLNAI), 227 to 249 (IWRLTFYNNVNACILFLPLLLLL), and 264 to 286 (AHFWGMMTLGGLFGFAIGYVTGL).

Belongs to the TPT transporter family. SLC35C subfamily.

It is found in the golgi apparatus membrane. The catalysed reaction is GMP(out) + GDP-beta-L-fucose(in) = GMP(in) + GDP-beta-L-fucose(out). Antiporter specific for GDP-l-fucose and depending on the concomitant reverse transport of GMP. Involved in GDP-fucose import from the cytoplasm into the Golgi lumen. The polypeptide is GDP-fucose transporter 1 (Homo sapiens (Human)).